The following is a 199-amino-acid chain: ATP-dependent Clp protease proteolytic subunit (199 aa).

Residue Ser97 is the Nucleophile of the active site. His122 is an active-site residue.

This sequence belongs to the peptidase S14 family. As to quaternary structure, fourteen ClpP subunits assemble into 2 heptameric rings which stack back to back to give a disk-like structure with a central cavity, resembling the structure of eukaryotic proteasomes.

It is found in the cytoplasm. The enzyme catalyses Hydrolysis of proteins to small peptides in the presence of ATP and magnesium. alpha-casein is the usual test substrate. In the absence of ATP, only oligopeptides shorter than five residues are hydrolyzed (such as succinyl-Leu-Tyr-|-NHMec, and Leu-Tyr-Leu-|-Tyr-Trp, in which cleavage of the -Tyr-|-Leu- and -Tyr-|-Trp bonds also occurs).. In terms of biological role, cleaves peptides in various proteins in a process that requires ATP hydrolysis. Has a chymotrypsin-like activity. Plays a major role in the degradation of misfolded proteins. This chain is ATP-dependent Clp protease proteolytic subunit, found in Citrifermentans bemidjiense (strain ATCC BAA-1014 / DSM 16622 / JCM 12645 / Bem) (Geobacter bemidjiensis).